The following is a 290-amino-acid chain: Putative phosphatase MPN_427 (290 aa).

D16 acts as the Nucleophile in catalysis. Position 16 (D16) interacts with Mg(2+). Position 17 (L17) interacts with phosphate. D18 contributes to the Mg(2+) binding site. Phosphate-binding positions include 53-54 (TG) and K216. D239 and S240 together coordinate Mg(2+). Residue N242 coordinates phosphate.

The protein belongs to the HAD-like hydrolase superfamily. Cof family. Requires Mg(2+) as cofactor.

In Mycoplasma pneumoniae (strain ATCC 29342 / M129 / Subtype 1) (Mycoplasmoides pneumoniae), this protein is Putative phosphatase MPN_427.